Here is a 426-residue protein sequence, read N- to C-terminus: GTPase Obg (426 aa).

Positions M1–I158 constitute an Obg domain. Disordered stretches follow at residues G66–V86 and G119–G146. The 171-residue stretch at A159–E329 folds into the OBG-type G domain. Residues G165 to S172, F190 to S194, D212 to G215, N282 to D285, and S310 to L312 contribute to the GTP site. Residues S172 and T192 each coordinate Mg(2+). One can recognise an OCT domain in the interval R348–E426.

Belongs to the TRAFAC class OBG-HflX-like GTPase superfamily. OBG GTPase family. Monomer. The cofactor is Mg(2+).

The protein localises to the cytoplasm. An essential GTPase which binds GTP, GDP and possibly (p)ppGpp with moderate affinity, with high nucleotide exchange rates and a fairly low GTP hydrolysis rate. Plays a role in control of the cell cycle, stress response, ribosome biogenesis and in those bacteria that undergo differentiation, in morphogenesis control. The chain is GTPase Obg from Oceanobacillus iheyensis (strain DSM 14371 / CIP 107618 / JCM 11309 / KCTC 3954 / HTE831).